The primary structure comprises 98 residues: NADH-ubiquinone oxidoreductase chain 4L (98 aa).

The next 3 helical transmembrane spans lie at 1 to 21 (MPVV…GLLI), 29 to 49 (SLLC…VTVL), and 61 to 81 (IILL…LVMV).

The protein belongs to the complex I subunit 4L family. As to quaternary structure, core subunit of respiratory chain NADH dehydrogenase (Complex I) which is composed of 45 different subunits.

It localises to the mitochondrion inner membrane. The catalysed reaction is a ubiquinone + NADH + 5 H(+)(in) = a ubiquinol + NAD(+) + 4 H(+)(out). Core subunit of the mitochondrial membrane respiratory chain NADH dehydrogenase (Complex I) which catalyzes electron transfer from NADH through the respiratory chain, using ubiquinone as an electron acceptor. Part of the enzyme membrane arm which is embedded in the lipid bilayer and involved in proton translocation. The chain is NADH-ubiquinone oxidoreductase chain 4L (MT-ND4L) from Helarctos malayanus (Malayan sun bear).